The sequence spans 83 residues: Cytochrome c6 (83 aa).

Positions 14, 17, and 18 each coordinate heme c. Lysine 24 is subject to N6-methyllysine; partial. Methionine 59 contributes to the heme c binding site.

It belongs to the cytochrome c family. PetJ subfamily. In terms of assembly, monomer. Binds 1 heme c group covalently per subunit. In terms of processing, 50% of the molecules were found to be monomethylated at Lys-24.

The protein localises to the plastid. Its subcellular location is the chloroplast thylakoid lumen. In terms of biological role, functions as an electron carrier between membrane-bound cytochrome b6-f and photosystem I in oxygenic photosynthesis. This Diacronema lutheri (Unicellular marine alga) protein is Cytochrome c6 (petJ).